The primary structure comprises 117 residues: Synaptobrevin homolog 1 (117 aa).

The segment at 1–30 (MSSSTPFDPYALSEHDEERPQNVQSKSRTA) is disordered. At 1–94 (MSSSTPFDPY…MWYKDLKMKM (94 aa)) the chain is on the cytoplasmic side. The v-SNARE coiled-coil homology domain occupies 28–88 (RTAELQAEID…NRVRKAMWYK (61 aa)). Lysine 63 is covalently cross-linked (Glycyl lysine isopeptide (Lys-Gly) (interchain with G-Cter in ubiquitin)). The S-palmitoyl cysteine moiety is linked to residue cysteine 95. The chain crosses the membrane as a helical; Anchor for type IV membrane protein span at residues 95–111 (CLALVIIILLVVIIVPI). Residues 112–117 (AVHFSR) are Vesicular-facing.

This sequence belongs to the synaptobrevin family. Palmitoylated by SWF1.

It is found in the endomembrane system. Its function is as follows. SNC1 and SNC2 are vesicle-targeting proteins essential for normal secretory traffic between the Golgi and the plasma membrane. They may also be involved in vesicle fusion. This is Synaptobrevin homolog 1 (SNC1) from Saccharomyces cerevisiae (strain ATCC 204508 / S288c) (Baker's yeast).